Reading from the N-terminus, the 159-residue chain is Troponin C, skeletal muscle (159 aa).

Thr1 is modified (N-acetylthreonine). EF-hand domains follow at residues 14 to 49 (EMIA…LGQT), 50 to 85 (PTKE…QMKE), 90 to 125 (KSEE…SGEH), and 126 to 159 (VTDE…EGVQ). 19 residues coordinate Ca(2+): Asp27, Asp29, Asp33, Glu38, Asp63, Asp65, Ser67, Thr69, Glu74, Asp103, Asn105, Asp107, Tyr109, Glu114, Asp139, Asn141, Asp143, Arg145, and Glu150.

It belongs to the troponin C family.

Troponin is the central regulatory protein of striated muscle contraction. Tn consists of three components: Tn-I which is the inhibitor of actomyosin ATPase, Tn-T which contains the binding site for tropomyosin and Tn-C. The binding of calcium to Tn-C abolishes the inhibitory action of Tn on actin filaments. In Sus scrofa (Pig), this protein is Troponin C, skeletal muscle (TNNC2).